The primary structure comprises 382 residues: Required for respiratory growth protein 1, mitochondrial (382 aa).

It belongs to the RRG1 family.

It localises to the mitochondrion. Its function is as follows. Essential for respiratory growth and required for mitochondrial protein synthesis. Required for vacuolar acidification. This chain is Required for respiratory growth protein 1, mitochondrial (RRG1), found in Vanderwaltozyma polyspora (strain ATCC 22028 / DSM 70294 / BCRC 21397 / CBS 2163 / NBRC 10782 / NRRL Y-8283 / UCD 57-17) (Kluyveromyces polysporus).